Consider the following 259-residue polypeptide: Phosphate import ATP-binding protein PstB (259 aa).

The region spanning 13–254 (LEVNNLNFHY…PRLQRTEDYI (242 aa)) is the ABC transporter domain. Position 45-52 (45-52 (GPSGCGKS)) interacts with ATP.

Belongs to the ABC transporter superfamily. Phosphate importer (TC 3.A.1.7) family. In terms of assembly, the complex is composed of two ATP-binding proteins (PstB), two transmembrane proteins (PstC and PstA) and a solute-binding protein (PstS).

The protein resides in the cell inner membrane. The enzyme catalyses phosphate(out) + ATP + H2O = ADP + 2 phosphate(in) + H(+). Its function is as follows. Part of the ABC transporter complex PstSACB involved in phosphate import. Responsible for energy coupling to the transport system. The protein is Phosphate import ATP-binding protein PstB of Pasteurella multocida (strain Pm70).